The sequence spans 321 residues: tRNA U34 carboxymethyltransferase (321 aa).

Carboxy-S-adenosyl-L-methionine is bound by residues Lys90, Trp104, Lys109, Gly129, 151 to 153 (DPT), 180 to 181 (IE), Met195, Tyr199, and Arg314.

It belongs to the class I-like SAM-binding methyltransferase superfamily. CmoB family. Homotetramer.

The catalysed reaction is carboxy-S-adenosyl-L-methionine + 5-hydroxyuridine(34) in tRNA = 5-carboxymethoxyuridine(34) in tRNA + S-adenosyl-L-homocysteine + H(+). Its function is as follows. Catalyzes carboxymethyl transfer from carboxy-S-adenosyl-L-methionine (Cx-SAM) to 5-hydroxyuridine (ho5U) to form 5-carboxymethoxyuridine (cmo5U) at position 34 in tRNAs. The chain is tRNA U34 carboxymethyltransferase from Haemophilus influenzae (strain PittGG).